We begin with the raw amino-acid sequence, 179 residues long: Crossover junction endodeoxyribonuclease RuvC (179 aa).

Catalysis depends on residues D7, E67, and D140. 3 residues coordinate Mg(2+): D7, E67, and D140.

The protein belongs to the RuvC family. As to quaternary structure, homodimer which binds Holliday junction (HJ) DNA. The HJ becomes 2-fold symmetrical on binding to RuvC with unstacked arms; it has a different conformation from HJ DNA in complex with RuvA. In the full resolvosome a probable DNA-RuvA(4)-RuvB(12)-RuvC(2) complex forms which resolves the HJ. Mg(2+) is required as a cofactor.

The protein resides in the cytoplasm. The catalysed reaction is Endonucleolytic cleavage at a junction such as a reciprocal single-stranded crossover between two homologous DNA duplexes (Holliday junction).. In terms of biological role, the RuvA-RuvB-RuvC complex processes Holliday junction (HJ) DNA during genetic recombination and DNA repair. Endonuclease that resolves HJ intermediates. Cleaves cruciform DNA by making single-stranded nicks across the HJ at symmetrical positions within the homologous arms, yielding a 5'-phosphate and a 3'-hydroxyl group; requires a central core of homology in the junction. The consensus cleavage sequence is 5'-(A/T)TT(C/G)-3'. Cleavage occurs on the 3'-side of the TT dinucleotide at the point of strand exchange. HJ branch migration catalyzed by RuvA-RuvB allows RuvC to scan DNA until it finds its consensus sequence, where it cleaves and resolves the cruciform DNA. This chain is Crossover junction endodeoxyribonuclease RuvC, found in Salinibacter ruber (strain DSM 13855 / M31).